The chain runs to 750 residues: MFVLLMLALVMLFIVQSSTNVIALWTNNVFQFSLILIPLVTLLAGSITADIFIEGYNNGIELFLFSKPISRDRILLIKLLVLLMYLSIVAVLSTAVVSLGYFTRNEIESYLDDLALSIFVGTILNGIIFSAVTIMLATRFSNIQSLIILLLFVSLFSFSSPIARLIFDTPAKTLSQQGYSVRQINGIAHSESPNVERKIYVSVKKRRLTGVDREEKELWKSDEQAALRGRNLYEEAQRTSSYINSFYTNIGYLFGSLYRLGALADENNFDASVATQNTKIRFGKLVDLDKSTDIIGYRTKDRFGRFFRFHLRFPTLNFKQSLSNSGVFFINKRGLVKATFSAGDDAFKRDPKIMQKVFDTFLESFSWFLDKKINRRIARIYAESDNKGSPFPKEGDDENTKGDDNSSEKTDTVSVSTKLKTTADQSESTQMSSESTATGISSDPQSQGKMNNKSEEQKKKEKELTWQIYRDIKFLNSIYFLQVNNERLWDNVAFLNKVNAEDQNGDKNQFAQAMASLNKQINMFYVLNEITNKEHNLPTKYGAYSDQLKKVINENFEKIENKKKEIEEKQNKEFQENKNGASNNQDTKQDAQKGDTNTQSTELKARQAQQVQKDQQNDSKGNTATNSDTGKSDNKTDTTEDEQNTYKPLTAREKKTKIKELTKDIFFSTAQNYLFLVQGGYNNKLFAGGLPELHQRFLSDVVVDFSEEKLVYEVQGEPIVSSVATIVITLFLTVVLLAIAFFFFKYRNVK.

Transmembrane regions (helical) follow at residues 2 to 22, 33 to 53, 79 to 99, 116 to 136, and 143 to 163; these read FVLLMLALVMLFIVQSSTNVI, SLILIPLVTLLAGSITADIFI, LLVLLMYLSIVAVLSTAVVSL, LSIFVGTILNGIIFSAVTIML, and IQSLIILLLFVSLFSFSSPIA. Disordered regions lie at residues 385 to 461 and 571 to 651; these read DNKG…KKKE and NKEF…PLTA. A compositionally biased stretch (basic and acidic residues) spans 398–411; the sequence is ENTKGDDNSSEKTD. A compositionally biased stretch (polar residues) spans 412–424; it reads TVSVSTKLKTTAD. The segment covering 425–436 has biased composition (low complexity); the sequence is QSESTQMSSEST. Positions 437 to 451 are enriched in polar residues; the sequence is ATGISSDPQSQGKMN. The span at 452–461 shows a compositional bias: basic and acidic residues; the sequence is NKSEEQKKKE. Residues 618 to 629 are compositionally biased toward polar residues; the sequence is DSKGNTATNSDT. The chain crosses the membrane as a helical span at residues 724 to 744; sequence ATIVITLFLTVVLLAIAFFFF.

This sequence to M.pneumoniae MPN_335.

It localises to the cell membrane. This is an uncharacterized protein from Mycoplasma pneumoniae (strain ATCC 29342 / M129 / Subtype 1) (Mycoplasmoides pneumoniae).